Reading from the N-terminus, the 103-residue chain is UPF0145 protein Amet_0532 (103 aa).

It belongs to the UPF0145 family.

The sequence is that of UPF0145 protein Amet_0532 from Alkaliphilus metalliredigens (strain QYMF).